Here is a 783-residue protein sequence, read N- to C-terminus: Probable alpha,alpha-trehalose-phosphate synthase [UDP-forming] 3 (783 aa).

Residues 11-456 form a glycosyltransferase region; that stretch reads QTLLVVANRL…GFDFLSELND (446 aa).

The protein in the N-terminal section; belongs to the glycosyltransferase 20 family. This sequence in the C-terminal section; belongs to the trehalose phosphatase family.

It catalyses the reaction D-glucose 6-phosphate + UDP-alpha-D-glucose = alpha,alpha-trehalose 6-phosphate + UDP + H(+). The chain is Probable alpha,alpha-trehalose-phosphate synthase [UDP-forming] 3 (TPS3) from Arabidopsis thaliana (Mouse-ear cress).